Consider the following 219-residue polypeptide: Probable nicotinate-nucleotide adenylyltransferase (219 aa).

This sequence belongs to the NadD family.

The enzyme catalyses nicotinate beta-D-ribonucleotide + ATP + H(+) = deamido-NAD(+) + diphosphate. It participates in cofactor biosynthesis; NAD(+) biosynthesis; deamido-NAD(+) from nicotinate D-ribonucleotide: step 1/1. Its function is as follows. Catalyzes the reversible adenylation of nicotinate mononucleotide (NaMN) to nicotinic acid adenine dinucleotide (NaAD). This Herminiimonas arsenicoxydans protein is Probable nicotinate-nucleotide adenylyltransferase.